Here is a 194-residue protein sequence, read N- to C-terminus: Histone H1.0 (194 aa).

Position 1 is an N-acetylmethionine (Met-1). Residues 1–26 (MTENSTSTPAAKPKRAKAAKKSTDHP) are disordered. Position 2 is an N-acetylthreonine; in Histone H1.0, N-terminally processed (Thr-2). The region spanning 24 to 97 (DHPKYSDMIV…GASGSFRLAK (74 aa)) is the H15 domain. At Arg-42 the chain carries Citrulline. Residues 86–194 (GVGASGSFRL…SSAKRASKKK (109 aa)) form a disordered region. Ser-104 carries the post-translational modification ADP-ribosylserine. Residues 105–194 (VAFKKTKKEV…SSAKRASKKK (90 aa)) show a composition bias toward basic residues.

This sequence belongs to the histone H1/H5 family. In terms of processing, ADP-ribosylated on Ser-104 in response to DNA damage.

It localises to the nucleus. The protein resides in the chromosome. Functionally, histones H1 are necessary for the condensation of nucleosome chains into higher-order structures. The histones H1.0 are found in cells that are in terminal stages of differentiation or that have low rates of cell division. This chain is Histone H1.0 (H1-0), found in Rattus norvegicus (Rat).